The following is a 132-amino-acid chain: Small ribosomal subunit protein uS8 (132 aa).

This sequence belongs to the universal ribosomal protein uS8 family. As to quaternary structure, part of the 30S ribosomal subunit. Contacts proteins S5 and S12.

One of the primary rRNA binding proteins, it binds directly to 16S rRNA central domain where it helps coordinate assembly of the platform of the 30S subunit. This is Small ribosomal subunit protein uS8 from Rhodococcus jostii (strain RHA1).